The primary structure comprises 562 residues: Arginine--tRNA ligase (562 aa).

Residues Ala129 to His139 carry the 'HIGH' region motif.

The protein belongs to the class-I aminoacyl-tRNA synthetase family. Monomer.

It is found in the cytoplasm. It carries out the reaction tRNA(Arg) + L-arginine + ATP = L-arginyl-tRNA(Arg) + AMP + diphosphate. The chain is Arginine--tRNA ligase from Stenotrophomonas maltophilia (strain K279a).